The following is an 83-amino-acid chain: Cardiotoxin 7'' (83 aa).

Positions 1-21 (MKTLLLTLVVVTIVCLDLGYT) are cleaved as a signal peptide. Cystine bridges form between Cys-24–Cys-43, Cys-36–Cys-61, Cys-65–Cys-76, and Cys-77–Cys-82.

It belongs to the three-finger toxin family. Short-chain subfamily. Orphan group XV sub-subfamily. Expressed by the venom gland.

It localises to the secreted. Its subcellular location is the target cell membrane. In terms of biological role, has low cytotoxic activity. This Naja atra (Chinese cobra) protein is Cardiotoxin 7''.